The chain runs to 174 residues: Small ribosomal subunit protein uS5 (174 aa).

In terms of domain architecture, S5 DRBM spans 16–79; sequence FSELIVSVRR…NAAKKNMIRV (64 aa).

It belongs to the universal ribosomal protein uS5 family. As to quaternary structure, part of the 30S ribosomal subunit. Contacts proteins S4 and S8.

Its function is as follows. With S4 and S12 plays an important role in translational accuracy. Located at the back of the 30S subunit body where it stabilizes the conformation of the head with respect to the body. This is Small ribosomal subunit protein uS5 from Ehrlichia canis (strain Jake).